A 465-amino-acid polypeptide reads, in one-letter code: Gamma-aminobutyric acid receptor subunit gamma-1 (465 aa).

The N-terminal stretch at Met-1 to Cys-35 is a signal peptide. Residues Val-36–Phe-273 are Extracellular-facing. Residues Asn-50 and Asn-127 are each glycosylated (N-linked (GlcNAc...) asparagine). Cys-188 and Cys-202 form a disulfide bridge. N-linked (GlcNAc...) asparagine glycosylation is present at Asn-245. The chain crosses the membrane as a helical span at residues Thr-274–Ile-294. Residues Asn-295–Pro-300 lie on the Cytoplasmic side of the membrane. Residues Ala-301–Ala-320 form a helical membrane-spanning segment. Residues Arg-321–Ser-328 lie on the Extracellular side of the membrane. The helical transmembrane segment at Tyr-329–Met-349 threads the bilayer. Over Glu-350 to Arg-444 the chain is Cytoplasmic. Residues Ile-445 to Leu-465 form a helical membrane-spanning segment.

Belongs to the ligand-gated ion channel (TC 1.A.9) family. Gamma-aminobutyric acid receptor (TC 1.A.9.5) subfamily. GABRG1 sub-subfamily. As to quaternary structure, heteropentamer, formed by a combination of alpha (GABRA1-6), beta (GABRB1-3), gamma (GABRG1-3), delta (GABRD), epsilon (GABRE), rho (GABRR1-3), pi (GABRP) and theta (GABRQ) chains, each subunit exhibiting distinct physiological and pharmacological properties. Post-translationally, may be palmitoylated.

It is found in the postsynaptic cell membrane. Its subcellular location is the cell membrane. The catalysed reaction is chloride(in) = chloride(out). Functionally, gamma subunit of the heteropentameric ligand-gated chloride channel gated by gamma-aminobutyric acid (GABA), a major inhibitory neurotransmitter in the brain. GABA-gated chloride channels, also named GABA(A) receptors (GABAAR), consist of five subunits arranged around a central pore and contain GABA active binding site(s) located at the alpha and beta subunit interface(s). When activated by GABA, GABAARs selectively allow the flow of chloride anions across the cell membrane down their electrochemical gradient. Chloride influx into the postsynaptic neuron following GABAAR opening decreases the neuron ability to generate a new action potential, thereby reducing nerve transmission. The polypeptide is Gamma-aminobutyric acid receptor subunit gamma-1 (Homo sapiens (Human)).